A 621-amino-acid chain; its full sequence is Autonomous transposable element EN-1 mosaic protein (621 aa).

Disordered stretches follow at residues 1 to 119, 428 to 447, 498 to 530, and 549 to 621; these read MFRM…PPRR, YTRR…PSAR, QQPP…TSVQ, and RQPG…PPTE. Polar residues-rich tracts occupy residues 27–39 and 47–61; these read EGTT…QEQL and RGSS…TTSR. The span at 82-102 shows a compositional bias: acidic residues; the sequence is AAVDAEAEEAAAELDDGEETS. Residues 570–594 show a composition bias toward low complexity; the sequence is PPRGQSQSPGLPSHSPGSGSGSHHA.

In terms of biological role, this protein has most probably three functions; the mutator (M) function, for excision and transposition; the suppressor (S) function, which inhibits residual gene activity of certain alleles in which inhibitor elements are integrated; an activator (A) function is proposed, because inactive SPM can be activated by a second SPM. This chain is Autonomous transposable element EN-1 mosaic protein, found in Zea mays (Maize).